Here is a 547-residue protein sequence, read N- to C-terminus: MSAASSAIPKRSDPRLLDQKKSAKSTLPKNTPENGVSTVKNLQHVPCKFFRNGTCTAGENCPFSHSLETERPICKYFLKGNCKFGPKCALSHALPGNTNLPNGTSTNTMASMAANGGASSVASKQMGANQISPSLSSKTMKNPADKANNTTATDVRGNTATSPYFPFSRSPGRHSGNSTINGMMTTPNFLSSGVNSRSVDEFNNSSSGFPSSLNGIPIASPPLATSPTSFSLASSASSTNLGGSKGLLFQQMTSENNRDYFSRRPTLLNTYGNRCSSTDTLSSLSRLTSQDPLKASLPLQSPPLAPKTGVSLSRPRLTLDQSLGNLSLGSGINQRRQVPRSNSYAGAFPSVVSASLPTKVDLNHQMDVSDEEQRFLSTPLGSFDESILGSSPINRLSSSFKQYTSSLKSPGLSTRTSSTMNSLNSSRFGAYFSKSRYVEGSGSMSTTPLATSVNNSYKLPSGFSVREEAVFSSPTTEGSRPVSLARLKSEPIFRSDTASPETIAGLGDTKNDPVVSTNNSVSRITVANSSPPWNSTVEEETPFQMDD.

The disordered stretch occupies residues M1–S37. The segment covering K10–K21 has biased composition (basic and acidic residues). The segment covering K24–S37 has biased composition (polar residues). C3H1-type zinc fingers lie at residues N41–L67 and E68–P95. Residues S132–G176 form a disordered region. A compositionally biased stretch (polar residues) spans A147–S162. Residue S343 is modified to Phosphoserine. Y344 carries the phosphotyrosine modification. Phosphoserine is present on residues S353, S355, S483, S489, S495, and S499. Residue T502 is modified to Phosphothreonine. The span at V526–T536 shows a compositional bias: polar residues. The interval V526 to D547 is disordered. Residues V537 to D547 show a composition bias toward acidic residues.

This is an uncharacterized protein from Schizosaccharomyces pombe (strain 972 / ATCC 24843) (Fission yeast).